The primary structure comprises 583 residues: MASKGSPSCRLVFCLLISAAVLRPGLGWYTVNSAYGDTIVMPCRLDVPQNLMFGKWKYEKPDGSPVFIAFRSSTKKSVQYDDVPEYKDRLSLSENYTLSINNAKISDEKRFVCMLVTEDNVFEAPTLVKVFKQPSKPEIVNRAAFLETEQLKKLGDCISRDSYPDGNITWYRNGKVLQPVDGEVSILFKKEIDPGTQLYTMTSSLEYKTTKSDIQMPFTCSVTYYGPSGQKTIYSEQAIFDIYYPTEQVTIQVLPPKNAIKEGDNITLQCLGNGNPPPEEFMFYLPGQAEGIRSSNTYTLTDVRRNATGDYKCSLIDQRNMAASTTITVHYLDLSLNPSGEVTKQIGDTLPVSCTISASRNATVVWMKDNIRLRSSPSFSSLHYQDAGNYVCETALQEVEGLKKRESLTLIVEGKPQIKMTKKTDPSGLSKTIICHVEGFPKPAIQWTITGSGSVINQTEESPYINGRYYSKIIISPEENVTLTCTAENQLERTVNSLNVSAISIPEHDEADDISDENREKVNDQAKLIVGIVVGLLLAALVAGVVYWLYMKKSKTASKHVNKDLGNMEENKKLEENNHKTEA.

A signal peptide spans 1-27 (MASKGSPSCRLVFCLLISAAVLRPGLG). Ig-like V-type domains lie at 28–120 (WYTV…TEDN) and 125–234 (PTLV…KTIY). The Extracellular segment spans residues 28–527 (WYTVNSAYGD…NREKVNDQAK (500 aa)). 2 disulfides stabilise this stretch: Cys43-Cys113 and Cys157-Cys220. 8 N-linked (GlcNAc...) asparagine glycosylation sites follow: Asn95, Asn167, Asn265, Asn306, Asn361, Asn457, Asn480, and Asn499. Ig-like C2-type domains lie at 245–328 (PTEQ…TTIT), 333–409 (DLSL…ESLT), and 416–501 (PQIK…LNVS). Cystine bridges form between Cys270/Cys313, Cys354/Cys392, and Cys435/Cys485. A helical transmembrane segment spans residues 528–549 (LIVGIVVGLLLAALVAGVVYWL). Residues 550–583 (YMKKSKTASKHVNKDLGNMEENKKLEENNHKTEA) are Cytoplasmic-facing. A disordered region spans residues 562–583 (NKDLGNMEENKKLEENNHKTEA). Basic and acidic residues predominate over residues 569–583 (EENKKLEENNHKTEA).

Homodimer. Interacts (via extracellular domain) with CD6 (via extracellular domain). Homodimerization and interaction with CD6 involve the same region and cannot occur simultaneously. The affinity for CD6 is much higher than the affinity for self-association. Interacts (via glycosylated extracellular domain) with LGALS1 and LGALS3. Interaction with LGALS1 or LGALS3 inhibits interaction with CD6. The N-terminus is blocked. Post-translationally, glycosylated. Strongest expression in the lung, then brain, liver, and kidney. Present in the somatosensory system, basal ganglia, cortex, olfactory system, and circumventricular organs.

It is found in the cell membrane. The protein localises to the cell projection. The protein resides in the axon. Its subcellular location is the dendrite. Cell adhesion molecule that mediates both heterotypic cell-cell contacts via its interaction with CD6, as well as homotypic cell-cell contacts. Promotes T-cell activation and proliferation via its interactions with CD6. Contributes to the formation and maturation of the immunological synapse via its interactions with CD6. Mediates homotypic interactions with cells that express ALCAM. Mediates attachment of dendritic cells onto endothelial cells via homotypic interaction. Inhibits endothelial cell migration and promotes endothelial tube formation via homotypic interactions. Required for normal organization of the lymph vessel network. Required for normal hematopoietic stem cell engraftment in the bone marrow. Plays a role in hematopoiesis; required for normal numbers of hematopoietic stem cells in bone marrow. Promotes in vitro osteoblast proliferation and differentiation. Promotes neurite extension, axon growth and axon guidance; axons grow preferentially on surfaces that contain ALCAM. Mediates outgrowth and pathfinding for retinal ganglion cell axons. The protein is CD166 antigen (Alcam) of Rattus norvegicus (Rat).